The sequence spans 318 residues: Serpentine receptor class delta-25 (318 aa).

The next 7 membrane-spanning stretches (helical) occupy residues 5–25 (LLHS…MYLA), 38–58 (VVIT…FFVM), 88–108 (HMFM…SYLF), 126–146 (IAFY…SIYI), 176–196 (ITLL…YTFI), 226–246 (TFKL…VAMF), and 258–278 (IVSV…IIFV).

Belongs to the nematode receptor-like protein srd family.

The protein localises to the membrane. This chain is Serpentine receptor class delta-25 (srd-25), found in Caenorhabditis elegans.